We begin with the raw amino-acid sequence, 202 residues long: NAD(P)H dehydrogenase (quinone) (202 aa).

Positions 7–193 (VLVLYYSMYG…TIARFQGRHF (187 aa)) constitute a Flavodoxin-like domain. FMN is bound by residues 13 to 18 (SMYGHI) and 82 to 84 (TRF). Residue Y15 coordinates NAD(+). Residue W102 participates in substrate binding. FMN is bound by residues 117–122 (STATGG) and H137.

Belongs to the WrbA family. The cofactor is FMN.

The enzyme catalyses a quinone + NADH + H(+) = a quinol + NAD(+). It carries out the reaction a quinone + NADPH + H(+) = a quinol + NADP(+). The sequence is that of NAD(P)H dehydrogenase (quinone) from Rhodospirillum rubrum (strain ATCC 11170 / ATH 1.1.1 / DSM 467 / LMG 4362 / NCIMB 8255 / S1).